Reading from the N-terminus, the 546-residue chain is Probable bifunctional SAT/APS kinase (546 aa).

Positions 1–370 are sulfate adenylyltransferase; it reads MEKIKYLKSI…LAETYVPKHK (370 aa). The interval 371–546 is adenylsulfate kinase; it reads QGFCVWLTGL…FLKKEGFIKD (176 aa). Residue 379–386 participates in ATP binding; sequence GLPCAGKS. S453 functions as the Phosphoserine intermediate in the catalytic mechanism.

In the N-terminal section; belongs to the sulfate adenylyltransferase family. This sequence in the C-terminal section; belongs to the APS kinase family.

The catalysed reaction is sulfate + ATP + H(+) = adenosine 5'-phosphosulfate + diphosphate. The enzyme catalyses adenosine 5'-phosphosulfate + ATP = 3'-phosphoadenylyl sulfate + ADP + H(+). It participates in sulfur metabolism; hydrogen sulfide biosynthesis; sulfite from sulfate: step 1/3. Its pathway is sulfur metabolism; hydrogen sulfide biosynthesis; sulfite from sulfate: step 2/3. This Aquifex aeolicus (strain VF5) protein is Probable bifunctional SAT/APS kinase (sat/cysC).